Here is a 274-residue protein sequence, read N- to C-terminus: UPF0173 metal-dependent hydrolase A2cp1_1196 (274 aa).

Belongs to the UPF0173 family.

The polypeptide is UPF0173 metal-dependent hydrolase A2cp1_1196 (Anaeromyxobacter dehalogenans (strain 2CP-1 / ATCC BAA-258)).